We begin with the raw amino-acid sequence, 541 residues long: uncharacterized protein (541 aa).

5 helical membrane passes run 10-32 (LNNQIFLLLLITLIGMTIGKINI), 39-57 (SSAIIFVGLFFGHFGYTLP), 62-84 (TLGLVLFIYSIGLQAGPGFFFSL), 91-113 (LSLGTVAIIGIGFLTTLATTYLF), and 146-168 (APAAYGVTYFFGIVGVIVFIQII). 2 consecutive RCK C-terminal domains span residues 183 to 260 (LNKE…DDLE) and 268 to 352 (TPVD…IFGN). 6 consecutive transmembrane segments (helical) span residues 357-375 (SYNFNILPIFTGLFLGFIL), 385-407 (SGIFYLGTTGGVLIAGLFLSNIY), 428-447 (GLVLFMATIGTQTGTSILAT), 452-474 (GLQLSLAGILVTTVPLISSVFIC), 481-500 (PFLSMLGVITGAMTSTPGLA), and 515-537 (YATVYPVALISMIIYTKLLIFIV).

This sequence belongs to the AAE transporter (TC 2.A.81) family.

The protein resides in the cell membrane. This is an uncharacterized protein from Desulfotalea psychrophila (strain LSv54 / DSM 12343).